The following is a 302-amino-acid chain: Sulfate adenylyltransferase subunit 2 (302 aa).

The protein belongs to the PAPS reductase family. CysD subfamily. Heterodimer composed of CysD, the smaller subunit, and CysN.

It catalyses the reaction sulfate + ATP + H(+) = adenosine 5'-phosphosulfate + diphosphate. It participates in sulfur metabolism; hydrogen sulfide biosynthesis; sulfite from sulfate: step 1/3. Functionally, with CysN forms the ATP sulfurylase (ATPS) that catalyzes the adenylation of sulfate producing adenosine 5'-phosphosulfate (APS) and diphosphate, the first enzymatic step in sulfur assimilation pathway. APS synthesis involves the formation of a high-energy phosphoric-sulfuric acid anhydride bond driven by GTP hydrolysis by CysN coupled to ATP hydrolysis by CysD. In Psychromonas ingrahamii (strain DSM 17664 / CCUG 51855 / 37), this protein is Sulfate adenylyltransferase subunit 2.